Here is a 185-residue protein sequence, read N- to C-terminus: Translation initiation factor IF-3 (185 aa).

It belongs to the IF-3 family. Monomer.

Its subcellular location is the cytoplasm. Its function is as follows. IF-3 binds to the 30S ribosomal subunit and shifts the equilibrium between 70S ribosomes and their 50S and 30S subunits in favor of the free subunits, thus enhancing the availability of 30S subunits on which protein synthesis initiation begins. In Rickettsia typhi (strain ATCC VR-144 / Wilmington), this protein is Translation initiation factor IF-3.